The following is a 104-amino-acid chain: UPF0134 protein MPN_104 (104 aa).

The protein belongs to the UPF0134 family.

The polypeptide is UPF0134 protein MPN_104 (Mycoplasma pneumoniae (strain ATCC 29342 / M129 / Subtype 1) (Mycoplasmoides pneumoniae)).